Consider the following 308-residue polypeptide: Putative S-adenosyl-L-methionine-dependent methyltransferase Mmcs_1045 (308 aa).

Residues Asp133 and 162 to 163 (DL) each bind S-adenosyl-L-methionine.

Belongs to the UPF0677 family.

In terms of biological role, exhibits S-adenosyl-L-methionine-dependent methyltransferase activity. The sequence is that of Putative S-adenosyl-L-methionine-dependent methyltransferase Mmcs_1045 from Mycobacterium sp. (strain MCS).